The chain runs to 86 residues: Translation machinery-associated protein 10 (86 aa).

Residues Ser-28 and Ser-79 each carry the phosphoserine modification. Residues 63 to 86 are disordered; it reads NKTRRGSNSQNNERRLSDLQQYHI.

This sequence belongs to the STF2 family. As to quaternary structure, associates with ribosomes.

Its subcellular location is the cytoplasm. It localises to the nucleus. Its function is as follows. May be involved in inhibition of the reverse ATPase reaction of mitochondrial F(1)F(0)-type ATP synthase. This chain is Translation machinery-associated protein 10, found in Saccharomyces cerevisiae (strain ATCC 204508 / S288c) (Baker's yeast).